Reading from the N-terminus, the 350-residue chain is tRNA uridine(34) hydroxylase (350 aa).

The region spanning 146–240 (DDPDALFIDM…YARKAREQGL (95 aa)) is the Rhodanese domain. The Cysteine persulfide intermediate role is filled by Cys200.

This sequence belongs to the TrhO family.

It carries out the reaction uridine(34) in tRNA + AH2 + O2 = 5-hydroxyuridine(34) in tRNA + A + H2O. Its function is as follows. Catalyzes oxygen-dependent 5-hydroxyuridine (ho5U) modification at position 34 in tRNAs, the first step in 5-carboxymethoxyuridine (cmo5U) biosynthesis. May be part of an alternate pathway, which is able to bypass cmo5U biogenesis in a subset of tRNAs under aerobic conditions. This Escherichia coli (strain SMS-3-5 / SECEC) protein is tRNA uridine(34) hydroxylase.